The chain runs to 484 residues: Dolichyl-P-Man:Man5GlcNAc2-PP-dolichol alpha-1,3-mannosyltransferase l(2)not2 (484 aa).

Topologically, residues 1–43 (MAPPKAASHRPAVRRKKSGTLVDSILDKYLNVRFFKYLLLEPA) are cytoplasmic. A helical transmembrane segment spans residues 44 to 64 (ALPIVGLFVLLAELVINVVVI). The Lumenal portion of the chain corresponds to 65–97 (QRVPYTEIDWVAYMQECEGFLNGTTNYSLLRGD). A helical transmembrane segment spans residues 98 to 118 (TGPLVYPAAFVYIYSALYYVT). Residues 119–125 (SHGTNVR) are Cytoplasmic-facing. A helical membrane pass occupies residues 126–146 (LAQYIFAGIYLLQLALVLRLY). Residues 147–171 (SKSRKVPPYVLVLSAFTSYRIHSIY) lie on the Lumenal side of the membrane. A helical membrane pass occupies residues 172–192 (VLRLFNDPVAVLLLYAALNLF). The Cytoplasmic segment spans residues 193–211 (LDRRWTLGSTFFSLAVGVK). The helical transmembrane segment at 212–232 (MNILLFAPALLLFYLANLGLL) threads the bilayer. Residue arginine 233 is a topological domain, lumenal. A helical transmembrane segment spans residues 234–254 (TILQLAVCGVIQLLLGAPFLL). Topologically, residues 255–294 (THPVEYLRGSFDLGRIFEHKWTVNYRFLSRDVFENRTFHV) are cytoplasmic. Residues 295–315 (SLLGLHLLLLLAFAKPTWTFF) traverse the membrane as a helical segment. The Lumenal segment spans residues 316-403 (QSYVRLRRIE…YGIHFDRCTQ (88 aa)). A helical membrane pass occupies residues 404–424 (LALLPFFLCNLVGVACSRSLH). Residues 425–426 (YQ) lie on the Cytoplasmic side of the membrane. Residues 427-447 (FYVWYFHSLPYLAWSTPYSLG) traverse the membrane as a helical segment. At 448-484 (VRCLILGLIEYCWNTYPSTNFSSAALHFTHIIPPYQL) the chain is on the lumenal side.

The protein belongs to the glycosyltransferase ALG3 family.

It localises to the endoplasmic reticulum membrane. It catalyses the reaction an alpha-D-Man-(1-&gt;2)-alpha-D-Man-(1-&gt;2)-alpha-D-Man-(1-&gt;3)-[alpha-D-Man-(1-&gt;6)]-beta-D-Man-(1-&gt;4)-beta-D-GlcNAc-(1-&gt;4)-alpha-D-GlcNAc-diphospho-di-trans,poly-cis-dolichol + a di-trans,poly-cis-dolichyl beta-D-mannosyl phosphate = an alpha-D-Man-(1-&gt;2)-alpha-D-Man-(1-&gt;2)-alpha-D-Man-(1-&gt;3)-[alpha-D-Man-(1-&gt;3)-alpha-D-Man-(1-&gt;6)]-beta-D-Man-(1-&gt;4)-beta-D-GlcNAc-(1-&gt;4)-alpha-D-GlcNAc-diphospho-di-trans,poly-cis-dolichol + a di-trans,poly-cis-dolichyl phosphate + H(+). It functions in the pathway protein modification; protein glycosylation. Probable alpha-1,3-mannosyltransferase involved in the N-glycosylation pathway. Involved in glycosylation of the TNF receptor grnd, regulating its ligand affinity. Required for normal epithelial growth and architecture. Suppressor of JNK-dependent intestinal stem cell proliferation. This chain is Dolichyl-P-Man:Man5GlcNAc2-PP-dolichol alpha-1,3-mannosyltransferase l(2)not2, found in Drosophila melanogaster (Fruit fly).